Reading from the N-terminus, the 504-residue chain is Activin receptor type-1-like (504 aa).

An N-terminal signal peptide occupies residues 1 to 20 (MTLGIFRRVFLMLSVALGLT). At 21-121 (KGDLVKPSRG…EEPEVDAHLP (101 aa)) the chain is on the extracellular side. N-linked (GlcNAc...) asparagine glycosylation is present at Asn34. 3 cysteine pairs are disulfide-bonded: Cys35–Cys52, Cys37–Cys42, and Cys47–Cys70. Positions 74 to 77 (NQEL) are mediates specificity for BMP ligand. 2 disulfide bridges follow: Cys78/Cys90 and Cys91/Cys96. The N-linked (GlcNAc...) asparagine glycan is linked to Asn99. The helical transmembrane segment at 122–142 (LILGPVLALLVLVALGTLGLW) threads the bilayer. At 143–504 (RVRRRQEKQR…QNPEKPKVIH (362 aa)) the chain is on the cytoplasmic side. Phosphoserine occurs at positions 156, 161, and 162. Residues 173–202 (SMLGDFLVSDCTTGSGSGLPFLVQRTVARQ) form the GS domain. Positions 203 to 504 (VALVECVGKG…QNPEKPKVIH (302 aa)) constitute a Protein kinase domain. Residues 209 to 217 (VGKGRYGEV) and Lys230 contribute to the ATP site. Asp331 serves as the catalytic Proton acceptor.

This sequence belongs to the protein kinase superfamily. TKL Ser/Thr protein kinase family. TGFB receptor subfamily. In terms of assembly, interacts with TSC22D1/TSC-22. Requires Mg(2+) as cofactor. Mn(2+) serves as cofactor. In terms of tissue distribution, urogenital ridge, testis, ovary, brain and lung. In lung, found exclusively in pulmonary vessels of all sizes. Also expressed in aorta, vena cava and certain blood vessels of kidney, spleen, heart and intestine. For most blood vessels, a higher level of expression is found in endothelium than in adjacent smooth muscle.

It is found in the cell membrane. It catalyses the reaction L-threonyl-[receptor-protein] + ATP = O-phospho-L-threonyl-[receptor-protein] + ADP + H(+). The catalysed reaction is L-seryl-[receptor-protein] + ATP = O-phospho-L-seryl-[receptor-protein] + ADP + H(+). In terms of biological role, type I receptor for TGF-beta family ligands BMP9/GDF2 and BMP10 and important regulator of normal blood vessel development. On ligand binding, forms a receptor complex consisting of two type II and two type I transmembrane serine/threonine kinases. Type II receptors phosphorylate and activate type I receptors which autophosphorylate, then bind and activate SMAD transcriptional regulators. May bind activin as well. This Rattus norvegicus (Rat) protein is Activin receptor type-1-like (Acvrl1).